The sequence spans 389 residues: Large envelope protein (389 aa).

Met1 bears the N-acetylmethionine mark. Gly2 carries the N-myristoyl glycine; by host lipid modification. The segment at 2–108 is pre-S1; sequence GQNLSTSNPL…PPLRDAHPQA (107 aa). The pre-S stretch occupies residues 2 to 163; that stretch reads GQNLSTSNPL…FSKIGDLAPN (162 aa). Residues 2–170 are Virion surface; in external conformation-facing; sequence GQNLSTSNPL…APNMENITSG (169 aa). Residues 2–242 are Intravirion; in internal conformation-facing; the sequence is GQNLSTSNPL…PGYRWMCLRR (241 aa). A disordered region spans residues 76–103; the sequence is TLPANPPPAATNRQSGRQPTPLSPPLRD. Positions 86 to 95 are enriched in polar residues; that stretch reads TNRQSGRQPT. Positions 109-163 are pre-S2; the sequence is MQWTSTTFHQALQDPRVRGLYFPAGGSSSGTVNPVPTTASPILSIFSKIGDLAPN. Residues 171 to 191 traverse the membrane as a helical segment; sequence FLGPLLVLQAGFFLLTRILTI. At 192-242 the chain is on the intravirion; in external conformation side; the sequence is PQSLDSWWTSLNFLGGTTVCLGQNSQSPTSNHSPTSCPPTCPGYRWMCLRR. Residues 243–263 traverse the membrane as a helical segment; the sequence is FIIFLFILLLCLIFLLVLLDY. Residues 264–337 are Virion surface-facing; it reads QGMLPVCPLI…WASARFSWLS (74 aa). Asn309 carries an N-linked (GlcNAc...) asparagine; by host glycan. Residues 338–358 form a helical membrane-spanning segment; sequence LLVPFVQWFAGLSPIVWLSVI. Residues 359-364 lie on the Intravirion side of the membrane; it reads WMMWYW. Residues 365 to 387 form a helical membrane-spanning segment; it reads GPSLYSILSPFLPLLPIFFCLWA. Topologically, residues 388-389 are virion surface; sequence YI.

This sequence belongs to the orthohepadnavirus major surface antigen family. In its internal form (Li-HBsAg), interacts with the capsid protein and with the isoform S. Interacts with host chaperone CANX. In terms of assembly, associates with host chaperone CANX through its pre-S2 N glycan; this association may be essential for isoform M proper secretion. As to quaternary structure, interacts with isoform L. Interacts with the antigens of satellite virus HDV (HDVAgs); this interaction is required for encapsidation of HDV genomic RNA. Isoform M is N-terminally acetylated by host at a ratio of 90%, and N-glycosylated by host at the pre-S2 region. Post-translationally, myristoylated.

Its subcellular location is the virion membrane. The large envelope protein exists in two topological conformations, one which is termed 'external' or Le-HBsAg and the other 'internal' or Li-HBsAg. In its external conformation the protein attaches the virus to cell receptors and thereby initiating infection. This interaction determines the species specificity and liver tropism. This attachment induces virion internalization predominantly through caveolin-mediated endocytosis. The large envelope protein also assures fusion between virion membrane and endosomal membrane. In its internal conformation the protein plays a role in virion morphogenesis and mediates the contact with the nucleocapsid like a matrix protein. In terms of biological role, the middle envelope protein plays an important role in the budding of the virion. It is involved in the induction of budding in a nucleocapsid independent way. In this process the majority of envelope proteins bud to form subviral lipoprotein particles of 22 nm of diameter that do not contain a nucleocapsid. The sequence is that of Large envelope protein from Homo sapiens (Human).